We begin with the raw amino-acid sequence, 301 residues long: Probable alpha-L-glutamate ligase 1 (301 aa).

The region spanning 104–287 is the ATP-grasp domain; it reads LQLLSRKGIG…VTEPIVEYIE (184 aa). Residues lysine 141, 178 to 179, aspartate 187, and 211 to 213 contribute to the ATP site; these read EY and RSN. Aspartate 248, glutamate 260, and asparagine 262 together coordinate Mg(2+). Positions 248, 260, and 262 each coordinate Mn(2+).

This sequence belongs to the RimK family. Requires Mg(2+) as cofactor. The cofactor is Mn(2+).

The sequence is that of Probable alpha-L-glutamate ligase 1 from Shewanella baltica (strain OS155 / ATCC BAA-1091).